The chain runs to 351 residues: uncharacterized protein (351 aa).

Residues aspartate 215, aspartate 226, histidine 290, glutamate 319, and glutamate 333 each contribute to the Mn(2+) site.

It belongs to the peptidase M24B family. The cofactor is Mn(2+).

This is an uncharacterized protein from Staphylococcus aureus (strain bovine RF122 / ET3-1).